Here is a 160-residue protein sequence, read N- to C-terminus: Transcription antitermination protein NusB (160 aa).

The protein belongs to the NusB family.

Involved in transcription antitermination. Required for transcription of ribosomal RNA (rRNA) genes. Binds specifically to the boxA antiterminator sequence of the ribosomal RNA (rrn) operons. The chain is Transcription antitermination protein NusB from Rhizobium johnstonii (strain DSM 114642 / LMG 32736 / 3841) (Rhizobium leguminosarum bv. viciae).